A 366-amino-acid polypeptide reads, in one-letter code: Capsular polysaccharide phosphotransferase LcbA (366 aa).

It belongs to the stealth family.

This Neisseria meningitidis protein is Capsular polysaccharide phosphotransferase LcbA (lcbA).